We begin with the raw amino-acid sequence, 1025 residues long: Putative receptor-like protein kinase At3g47110 (1025 aa).

A signal peptide spans 1–30 (MGVPCIVMRLILVSALLVSVSLEHSDMVCA). Residues 31–653 (QTIRLTEETD…LPRRHSSVRK (623 aa)) lie on the Extracellular side of the membrane. Asparagine 63 and asparagine 103 each carry an N-linked (GlcNAc...) asparagine glycan. LRR repeat units follow at residues 104-128 (LSFLRSLNLADNFFHGAIPSEVGNL), 130-151 (RLQYLNMSNNLFGGVIPVVLSN), 152-175 (CSSLSTLDLSSNHLEQGVPLEFGS), 176-200 (LSKLVLLSLGRNNLTGKFPASLGNL), 202-224 (SLQMLDFIYNQIEGEIPGDIARL), 226-248 (QMIFFRIALNKFNGVFPPPIYNL), 249-271 (SSLIFLSITGNSFSGTLRPDFGS), 273-297 (LPNLQILYMGINSFTGTIPETLSNI), 298-323 (SSLRQLDIPSNHLTGKIPLSFGRLQN), and 325-344 (LLLGLNNNSLGNYSSGDLDF). N-linked (GlcNAc...) asparagine glycans are attached at residues asparagine 135 and asparagine 151. 2 N-linked (GlcNAc...) asparagine glycosylation sites follow: asparagine 188 and asparagine 199. A glycan (N-linked (GlcNAc...) asparagine) is linked at asparagine 247. N-linked (GlcNAc...) asparagine glycosylation is present at asparagine 296. Asparagine 331, asparagine 336, asparagine 350, and asparagine 374 each carry an N-linked (GlcNAc...) asparagine glycan. 11 LRR repeats span residues 351-374 (CSQLQYLNVGFNKLGGQLPVFIAN), 376-400 (STQLTELSLGGNLISGSIPHGIGNL), 401-424 (VSLQTLDLGENLLTGKLPPSLGEL), 426-448 (ELRKVLLYSNGLSGEIPSSLGNI), 449-472 (SGLTYLYLLNNSFEGSIPSSLGSC), 473-496 (SYLLDLNLGTNKLNGSIPHELMEL), 498-520 (SLVVLNVSFNLLVGPLRQDIGKL), 521-544 (KFLLALDVSYNKLSGQIPQTLANC), 546-567 (SLEFLLLQGNSFVGPIPDIRGL), 568-593 (TGLRFLDLSKNNLSGTIPEYMANFSK), and 595-616 (QNLNLSLNNFDGAVPTEGVFRN). Asparagine 447, asparagine 458, asparagine 486, and asparagine 503 each carry an N-linked (GlcNAc...) asparagine glycan. 4 N-linked (GlcNAc...) asparagine glycosylation sites follow: asparagine 579, asparagine 590, asparagine 598, and asparagine 616. A helical transmembrane segment spans residues 654-674 (IITICVSAVMAALLLLCLCVV). Topologically, residues 675-1025 (YLCWYKLRVK…RESFFRDEET (351 aa)) are cytoplasmic. Threonine 716 is modified (phosphothreonine). The 302-residue stretch at 719–1020 (FSSSNLIGSG…KLVSIRESFF (302 aa)) folds into the Protein kinase domain. ATP-binding positions include 725–733 (IGSGNFGAV) and lysine 748. A phosphotyrosine mark is found at tyrosine 798 and tyrosine 843. Residue aspartate 856 is the Proton acceptor of the active site. Position 904 is a phosphotyrosine (tyrosine 904).

It belongs to the protein kinase superfamily. Ser/Thr protein kinase family.

It localises to the cell membrane. The enzyme catalyses L-seryl-[protein] + ATP = O-phospho-L-seryl-[protein] + ADP + H(+). It catalyses the reaction L-threonyl-[protein] + ATP = O-phospho-L-threonyl-[protein] + ADP + H(+). The sequence is that of Putative receptor-like protein kinase At3g47110 from Arabidopsis thaliana (Mouse-ear cress).